A 541-amino-acid polypeptide reads, in one-letter code: MAVAEIKKEKGSSLSPEPSSPIQILSTEPDANTDIKQEKFTPKDILPGCKVHVSKDGEFRLAEILQEHIKKGRKVFYVHYQDFNKRLDEWIELDRIDFTRSLILPEIKADTKENKSKKKSKSKGQTKLSKNNTTANSTTGTPQPSDGQPIMGDDEMDLENLNVQGLKRPGEEFSREDEIKKLRTSGSMTQNHSEVARVRNLSTIILGEHIIEPWYFSPYPIELTEEDEIYICDFTLSYFGSKKQFERFRSKCSMKHPPGNEIYRDSKVSFWEIDGRKQRTWCRNLCLLSKLFLDHKTLYYDVDPFLFYIMTIKSDQGHHVVGYFSKEKESADGYNVACILTLPCYQKRGFGKLLIQFSYMLTKVERKVGSPEKPLSDLGLLSYRAYWTDTLVKLLVERNSPALFRKNNSQLEYDEAENGKDSSATPTPGPGSNASQSSILASAAASRSGLNSSPIFSNEITIEDISSITCMTTTDILHTLTTLQMLRYYKGQHIIVLTDQIMELYEKLVKKVKEKKKHELNPKLLHWTPPSFTANQLRFGW.

Residues 1–11 (MAVAEIKKEKG) show a composition bias toward basic and acidic residues. The tract at residues 1 to 31 (MAVAEIKKEKGSSLSPEPSSPIQILSTEPDA) is disordered. Residues 12–30 (SSLSPEPSSPIQILSTEPD) are compositionally biased toward polar residues. One can recognise a Tudor-knot domain in the interval 47–97 (PGCKVHVSKDGEFRLAEILQEHIKKGRKVFYVHYQDFNKRLDEWIELDRID). Residues 111 to 154 (TKENKSKKKSKSKGQTKLSKNNTTANSTTGTPQPSDGQPIMGDD) are disordered. Residues 115–124 (KSKKKSKSKG) show a composition bias toward basic residues. Positions 131–146 (NNTTANSTTGTPQPSD) are enriched in polar residues. The 334-residue stretch at 196–529 (ARVRNLSTII…LNPKLLHWTP (334 aa)) folds into the MYST-type HAT domain. The segment at 229 to 254 (IYICDFTLSYFGSKKQFERFRSKCSM) adopts a C2HC MYST-type; degenerate zinc-finger fold. The ESA1-RPD3 motif motif lies at 279 to 300 (RTWCRNLCLLSKLFLDHKTLYY). Lysine 296 is modified (N6-acetyllysine; by autocatalysis). Acetyl-CoA is bound by residues 337-341 (ACILT) and 346-352 (QKRGFGK). Catalysis depends on glutamate 372, which acts as the Proton donor/acceptor. Serine 376 contacts acetyl-CoA. A disordered region spans residues 413-438 (YDEAENGKDSSATPTPGPGSNASQSS).

It belongs to the MYST (SAS/MOZ) family. Component of the NuA4 histone acetyltransferase complex. Autoacetylation at Lys-296 is required for proper function.

The protein resides in the nucleus. Its subcellular location is the chromosome. The enzyme catalyses L-lysyl-[histone] + acetyl-CoA = N(6)-acetyl-L-lysyl-[histone] + CoA + H(+). It carries out the reaction L-lysyl-[protein] + acetyl-CoA = N(6)-acetyl-L-lysyl-[protein] + CoA + H(+). The catalysed reaction is 2-hydroxyisobutanoyl-CoA + L-lysyl-[protein] = N(6)-(2-hydroxyisobutanoyl)-L-lysyl-[protein] + CoA + H(+). It catalyses the reaction (2E)-butenoyl-CoA + L-lysyl-[protein] = N(6)-(2E)-butenoyl-L-lysyl-[protein] + CoA + H(+). Its function is as follows. Catalytic component of the NuA4 histone acetyltransferase (HAT) complex which is involved in epigenetic transcriptional activation of selected genes principally by acetylation of nucleosomal histones H4, H3, H2B, H2A and H2A variant H2A.Z. Acetylates histone H4 to form H4K5ac, H4K8ac, H4K12ac and H4K16ac, histone H3 to form H3K14ac, and histone H2A to form H2AK4ac and H2AK7ac. The NuA4 complex is involved in the DNA damage response and is required for chromosome segregation. The NuA4 complex plays a direct role in repair of DNA double-strand breaks (DSBs) through homologous recombination. Recruitment to promoters depends on H3K4me. Also acetylates non-histone proteins. In addition to protein acetyltransferase, can use different acyl-CoA substrates, such as 2-hydroxyisobutanoyl-CoA (2-hydroxyisobutyryl-CoA) or (2E)-butenoyl-CoA (crotonyl-CoA), and is able to mediate protein 2-hydroxyisobutyrylation and crotonylation, respectively. In Candida albicans (strain SC5314 / ATCC MYA-2876) (Yeast), this protein is Histone acetyltransferase ESA1 (ESA1).